Reading from the N-terminus, the 231-residue chain is MDQDEALTTVDNIVTQFNTYEDFLDSQITTLDLYYLEDEGLARQLVELGYRGTGEVVKREDFEARKAAIEIARLAERTQKKTLTSAGKDLHDNFLKALAVREEDNRSGKSVIFIRDKNSHGQEVSGYIDYAHRLKTEDFEVYFSGKKRLLPRPTDMSFYNWDSHIAIWNSTPNYQVIADNPEGLLFKYKRDRKILNVDPKAQPGDNSTRSPILTELYTQVVIFDHVSRRKT.

Its subcellular location is the cytoplasm. The protein localises to the nucleus. May be involved in spermatogenesis. This is Cilia- and flagella-associated protein 299 from Bos taurus (Bovine).